We begin with the raw amino-acid sequence, 436 residues long: Protein FAM83A (436 aa).

The tract at residues M1–G298 is DUF1669. The tract at residues A73 to L95 is disordered. Phosphoserine is present on residues S301, S329, S350, and S359. Residues P302 to L371 are disordered. The segment covering L321–Q349 has biased composition (polar residues). Residues S350 to S359 are compositionally biased toward low complexity.

This sequence belongs to the FAM83 family. As to quaternary structure, directly interacts (via DUF1669) with casein kinase isoforms CSNK1A1, CSNK1A1L, CSNK1D and CSNK1E. In terms of processing, may be phosphorylated upon EGFR activation. Widely expressed, with relatively higher expression levels in adipose tissues, especially in epididymal and inguinal white adipose tissue (at protein level).

Its subcellular location is the cytoplasm. The protein resides in the mitochondrion. Functionally, involved in mitochondrial maintenance during adipogenesis. May be acting by playing a role in the maintenance of normal mitochondrial function. This chain is Protein FAM83A, found in Mus musculus (Mouse).